We begin with the raw amino-acid sequence, 384 residues long: S-adenosylmethionine synthase (384 aa).

Histidine 15 provides a ligand contact to ATP. Mg(2+) is bound at residue aspartate 17. Position 43 (glutamate 43) interacts with K(+). Glutamate 56 and glutamine 99 together coordinate L-methionine. The tract at residues 99-109 (QSPDINQGVDR) is flexible loop. ATP is bound by residues 164 to 166 (DAK), 230 to 231 (RF), aspartate 239, 245 to 246 (RK), alanine 262, and lysine 266. Position 239 (aspartate 239) interacts with L-methionine. Lysine 270 is an L-methionine binding site.

The protein belongs to the AdoMet synthase family. As to quaternary structure, homotetramer; dimer of dimers. Mg(2+) is required as a cofactor. It depends on K(+) as a cofactor.

The protein localises to the cytoplasm. The catalysed reaction is L-methionine + ATP + H2O = S-adenosyl-L-methionine + phosphate + diphosphate. The protein operates within amino-acid biosynthesis; S-adenosyl-L-methionine biosynthesis; S-adenosyl-L-methionine from L-methionine: step 1/1. Functionally, catalyzes the formation of S-adenosylmethionine (AdoMet) from methionine and ATP. The overall synthetic reaction is composed of two sequential steps, AdoMet formation and the subsequent tripolyphosphate hydrolysis which occurs prior to release of AdoMet from the enzyme. The chain is S-adenosylmethionine synthase from Salmonella choleraesuis (strain SC-B67).